Reading from the N-terminus, the 99-residue chain is Large ribosomal subunit protein uL23 (99 aa).

Belongs to the universal ribosomal protein uL23 family. As to quaternary structure, part of the 50S ribosomal subunit. Contacts protein L29, and trigger factor when it is bound to the ribosome.

One of the early assembly proteins it binds 23S rRNA. One of the proteins that surrounds the polypeptide exit tunnel on the outside of the ribosome. Forms the main docking site for trigger factor binding to the ribosome. This Haemophilus influenzae (strain 86-028NP) protein is Large ribosomal subunit protein uL23.